The chain runs to 494 residues: Probable cytosol aminopeptidase (494 aa).

Mn(2+) is bound by residues K260 and D265. The active site involves K272. Residues D283, D342, and E344 each coordinate Mn(2+). Residue R346 is part of the active site.

It belongs to the peptidase M17 family. Requires Mn(2+) as cofactor.

The protein localises to the cytoplasm. It carries out the reaction Release of an N-terminal amino acid, Xaa-|-Yaa-, in which Xaa is preferably Leu, but may be other amino acids including Pro although not Arg or Lys, and Yaa may be Pro. Amino acid amides and methyl esters are also readily hydrolyzed, but rates on arylamides are exceedingly low.. The enzyme catalyses Release of an N-terminal amino acid, preferentially leucine, but not glutamic or aspartic acids.. In terms of biological role, presumably involved in the processing and regular turnover of intracellular proteins. Catalyzes the removal of unsubstituted N-terminal amino acids from various peptides. This chain is Probable cytosol aminopeptidase, found in Bacillus cereus (strain B4264).